We begin with the raw amino-acid sequence, 169 residues long: Secretory-abundant heat soluble protein 1 (169 aa).

Residues 1–19 (MSRAAVAIALLGCVVAAYG) form the signal peptide. The interval 31–60 (EWTGKSWMGKWESTDRIENFDAFISALGLP) is SAHS-c1. Residues 75-103 (WKEGDHYHHQISVPDKNYKNDVNFKLNEE) form an SAHS-c2 region. A glycan (N-linked (GlcNAc...) asparagine) is linked at Asn-109. Residues 116 to 165 (KYTEDGGNLKAEVHVPSRNKVIHDEYKVNGDELEKTYKVGDVTAKRWYKK) form an SAHS-c3 region.

The protein belongs to the Secretory-abundant heat soluble protein (SAHS) family.

The protein resides in the secreted. Secreted heat soluble protein acting as a molecular shield in water-deficient condition. Tardigrade-specific intrinsically disordered proteins (TDPs) are essential for desiccation tolerance by forming non-crystalline amorphous solids upon desiccation, and this vitrified state mirrors their protective capabilities. In Ramazzottius varieornatus (Water bear), this protein is Secretory-abundant heat soluble protein 1.